Here is a 505-residue protein sequence, read N- to C-terminus: AAA-ATPase At5g17760 (505 aa).

Residues 11–27 traverse the membrane as a helical segment; it reads TSVFTAYASMAGYMMMI. Residues 136–155 are disordered; it reads GGGGGVGGRGGGGGRRGGMD. The segment covering 137–151 has biased composition (gly residues); it reads GGGGVGGRGGGGGRR. Residue 260–267 participates in ATP binding; it reads GPPGTGKS.

The protein belongs to the AAA ATPase family. BCS1 subfamily. It depends on Mg(2+) as a cofactor.

The protein localises to the membrane. The enzyme catalyses ATP + H2O = ADP + phosphate + H(+). The sequence is that of AAA-ATPase At5g17760 from Arabidopsis thaliana (Mouse-ear cress).